The chain runs to 146 residues: Wheatwin-1 (146 aa).

Positions 1-21 are cleaved as a signal peptide; sequence MAARPMLVVALLCAAAAAATA. The residue at position 22 (glutamine 22) is a Pyrrolidone carboxylic acid. The 125-residue stretch at 22–146 folds into the Barwin domain; it reads QQATNVRATY…VNYQFVDCRD (125 aa). Cystine bridges form between cysteine 52-cysteine 84, cysteine 73-cysteine 107, and cysteine 87-cysteine 144.

As to quaternary structure, monomer.

With respect to regulation, inhibited by 5'-ADP. Its function is as follows. Shows antifungal activity towards B.cinerea and towards the wheat-specific pathogenic fungi F.culmorum and F.graminearum (groups 1 and 2). Has ribonuclease activity. In Triticum aestivum (Wheat), this protein is Wheatwin-1 (PR4A).